The primary structure comprises 86 residues: Small ribosomal subunit protein uS15 (86 aa).

It belongs to the universal ribosomal protein uS15 family. Part of the 30S ribosomal subunit. Forms a bridge to the 50S subunit in the 70S ribosome, contacting the 23S rRNA.

In terms of biological role, one of the primary rRNA binding proteins, it binds directly to 16S rRNA where it helps nucleate assembly of the platform of the 30S subunit by binding and bridging several RNA helices of the 16S rRNA. Its function is as follows. Forms an intersubunit bridge (bridge B4) with the 23S rRNA of the 50S subunit in the ribosome. The chain is Small ribosomal subunit protein uS15 from Vesicomyosocius okutanii subsp. Calyptogena okutanii (strain HA).